The sequence spans 271 residues: Metal-staphylopine import system ATP-binding protein CntD (271 aa).

An ABC transporter domain is found at 6–251 (VKHLTITDTW…PEHVYTKYLL (246 aa)). Position 38-45 (38-45 (GESGSGKS)) interacts with ATP.

It belongs to the ABC transporter superfamily. As to quaternary structure, the complex is composed of two ATP-binding proteins (CntD and CntF), two transmembrane proteins (CntB and CntC) and a solute-binding protein (CntA).

The protein localises to the cell membrane. Its activity is regulated as follows. Nickel/cobalt import is reduced in the presence of zinc. In terms of biological role, part of the ABC transporter complex CntABCDF (Opp1) involved in the uptake of metal in complex with the metallophore staphylopine (StP). Involved in the import of divalent metals ions such as nickel, cobalt and zinc. Probably responsible for energy coupling to the transport system. Plays a major role in nickel/cobalt import in zinc-depleted conditions. Contributes to virulence. Required for full urease activity in vitro. The sequence is that of Metal-staphylopine import system ATP-binding protein CntD from Staphylococcus aureus (strain NCTC 8325 / PS 47).